The chain runs to 261 residues: MSTDRSIRIGIAGMAGRMGSLLVEEAAAQGTVSGGTLRPGSNSPAPVGIPAFADINTLAEASDAVIDFTSASTVQAHARALSKAGTAWILGTSGLSPADEKAVEEIAALVPVVYAPNFAPGVNLVLALAEKMAAALPGNRYDAEIVEMHHRRKIDSPSGTAIGLGRAVAAGRGVMLEEVIESGRHGHVGPRQPGAIGFAALRGGQVVGEHTLLFAADDEHIALTHRAFDRRAFARGAVQAALWVQGKPPGLYSMMDVLGMR.

Residues 13 to 18 (GMAGRM), 91 to 93 (GTS), and 115 to 118 (APNF) contribute to the NAD(+) site. Catalysis depends on His-149, which acts as the Proton donor/acceptor. His-150 is a binding site for (S)-2,3,4,5-tetrahydrodipicolinate. Lys-153 functions as the Proton donor in the catalytic mechanism. (S)-2,3,4,5-tetrahydrodipicolinate is bound at residue 159–160 (GT).

The protein belongs to the DapB family.

The protein localises to the cytoplasm. The enzyme catalyses (S)-2,3,4,5-tetrahydrodipicolinate + NAD(+) + H2O = (2S,4S)-4-hydroxy-2,3,4,5-tetrahydrodipicolinate + NADH + H(+). It catalyses the reaction (S)-2,3,4,5-tetrahydrodipicolinate + NADP(+) + H2O = (2S,4S)-4-hydroxy-2,3,4,5-tetrahydrodipicolinate + NADPH + H(+). It functions in the pathway amino-acid biosynthesis; L-lysine biosynthesis via DAP pathway; (S)-tetrahydrodipicolinate from L-aspartate: step 4/4. In terms of biological role, catalyzes the conversion of 4-hydroxy-tetrahydrodipicolinate (HTPA) to tetrahydrodipicolinate. The protein is 4-hydroxy-tetrahydrodipicolinate reductase of Granulibacter bethesdensis (strain ATCC BAA-1260 / CGDNIH1).